We begin with the raw amino-acid sequence, 338 residues long: RNA 3'-terminal phosphate cyclase (338 aa).

Residues Gln-103 and 283–287 (YLADQ) each bind ATP. His-308 (tele-AMP-histidine intermediate) is an active-site residue.

This sequence belongs to the RNA 3'-terminal cyclase family. Type 1 subfamily.

The protein localises to the cytoplasm. It catalyses the reaction a 3'-end 3'-phospho-ribonucleotide-RNA + ATP = a 3'-end 2',3'-cyclophospho-ribonucleotide-RNA + AMP + diphosphate. Catalyzes the conversion of 3'-phosphate to a 2',3'-cyclic phosphodiester at the end of RNA. The mechanism of action of the enzyme occurs in 3 steps: (A) adenylation of the enzyme by ATP; (B) transfer of adenylate to an RNA-N3'P to produce RNA-N3'PP5'A; (C) and attack of the adjacent 2'-hydroxyl on the 3'-phosphorus in the diester linkage to produce the cyclic end product. The biological role of this enzyme is unknown but it is likely to function in some aspects of cellular RNA processing. The chain is RNA 3'-terminal phosphate cyclase from Escherichia coli O9:H4 (strain HS).